The chain runs to 202 residues: Polyamine-modulated factor 1 (202 aa).

Over residues 1 to 15 (MAEVSRDSEAAERGP) the composition is skewed to basic and acidic residues. The disordered stretch occupies residues 1-26 (MAEVSRDSEAAERGPEGSSPEAVPGD). Residues 153 to 194 (EAKNQELADAVLAGRRQVEELQQQVRALQQTWQALHREQREL) adopt a coiled-coil conformation.

Component of the MIS12 complex composed of MIS12, DSN1, NSL1 and PMF1. Interacts with COPS7A. Interacts via its coiled-coil domain with the leucine-zipper domain of NFE2L2. The interaction with NFE2L2 is required for the transcriptional regulation of SSAT.

The protein resides in the nucleus. The protein localises to the chromosome. Its subcellular location is the centromere. It is found in the kinetochore. In terms of biological role, part of the MIS12 complex which is required for normal chromosome alignment and segregation and for kinetochore formation during mitosis. May act as a cotranscription partner of NFE2L2 involved in regulation of polyamine-induced transcription of SSAT. This is Polyamine-modulated factor 1 from Mus musculus (Mouse).